Consider the following 102-residue polypeptide: MAKQKIRIRLKAYDHRLLDASAKKIVEAVKMTNAKVSGPIPLPTERTLYTVLTSPHKYKDAREQFEKLVHKRLIEIIDPTPKTIDSLMKVDLPAGVDVEIKL.

It belongs to the universal ribosomal protein uS10 family. In terms of assembly, part of the 30S ribosomal subunit.

Functionally, involved in the binding of tRNA to the ribosomes. The polypeptide is Small ribosomal subunit protein uS10 (Kosmotoga olearia (strain ATCC BAA-1733 / DSM 21960 / TBF 19.5.1)).